We begin with the raw amino-acid sequence, 227 residues long: Enolase-phosphatase E1 (227 aa).

Positions 12 and 14 each coordinate Mg(2+). Substrate-binding positions include 118–119 and Lys-159; that span reads SS. Asp-186 lines the Mg(2+) pocket.

Belongs to the HAD-like hydrolase superfamily. MasA/MtnC family. In terms of assembly, monomer. The cofactor is Mg(2+).

Its subcellular location is the cytoplasm. The protein resides in the nucleus. The catalysed reaction is 5-methylsulfanyl-2,3-dioxopentyl phosphate + H2O = 1,2-dihydroxy-5-(methylsulfanyl)pent-1-en-3-one + phosphate. Its pathway is amino-acid biosynthesis; L-methionine biosynthesis via salvage pathway; L-methionine from S-methyl-5-thio-alpha-D-ribose 1-phosphate: step 3/6. It functions in the pathway amino-acid biosynthesis; L-methionine biosynthesis via salvage pathway; L-methionine from S-methyl-5-thio-alpha-D-ribose 1-phosphate: step 4/6. Its function is as follows. Bifunctional enzyme that catalyzes the enolization of 2,3-diketo-5-methylthiopentyl-1-phosphate (DK-MTP-1-P) into the intermediate 2-hydroxy-3-keto-5-methylthiopentenyl-1-phosphate (HK-MTPenyl-1-P), which is then dephosphorylated to form the acireductone 1,2-dihydroxy-3-keto-5-methylthiopentene (DHK-MTPene). This is Enolase-phosphatase E1 from Vanderwaltozyma polyspora (strain ATCC 22028 / DSM 70294 / BCRC 21397 / CBS 2163 / NBRC 10782 / NRRL Y-8283 / UCD 57-17) (Kluyveromyces polysporus).